The sequence spans 175 residues: Rubredoxin-1 (175 aa).

Rubredoxin-like domains are found at residues 1–53 and 119–170; these read MARY…FVLI and FLKW…YVLY. Residues cysteine 6, cysteine 9, cysteine 39, cysteine 42, cysteine 124, cysteine 127, cysteine 157, and cysteine 160 each contribute to the Fe cation site.

The protein belongs to the rubredoxin family. It depends on Fe(3+) as a cofactor.

The protein resides in the cytoplasm. It participates in hydrocarbon metabolism; alkane degradation. In terms of biological role, involved in the hydrocarbon hydroxylating system, which transfers electrons from NADH to rubredoxin reductase and then through rubredoxin to alkane 1 monooxygenase. This is Rubredoxin-1 (alkG) from Pseudomonas putida (Arthrobacter siderocapsulatus).